A 176-amino-acid polypeptide reads, in one-letter code: ATP-dependent protease subunit HslV (176 aa).

The active site involves Thr-2. 3 residues coordinate Na(+): Gly-157, Cys-160, and Thr-163.

It belongs to the peptidase T1B family. HslV subfamily. A double ring-shaped homohexamer of HslV is capped on each side by a ring-shaped HslU homohexamer. The assembly of the HslU/HslV complex is dependent on binding of ATP.

The protein resides in the cytoplasm. The catalysed reaction is ATP-dependent cleavage of peptide bonds with broad specificity.. Its activity is regulated as follows. Allosterically activated by HslU binding. Protease subunit of a proteasome-like degradation complex believed to be a general protein degrading machinery. This Proteus mirabilis (strain HI4320) protein is ATP-dependent protease subunit HslV.